The sequence spans 121 residues: B-box domain protein 31 (121 aa).

Residues 26–72 (SVPVRCELCDGDASVFCEADSAFLCRKCDRWVHGANFLAWRHVRRVL) form a B box-type; atypical zinc finger. The short motif at 117–121 (PFVFL) is the PFVFL element.

As to expression, highly expressed in shoot apical meristems and in vascular tissues of leaves. Also detected in petioles.

Its function is as follows. Developmental regulator acting by forming heterodimeric complexes, that sequester CO and CO-like (COL) proteins into non-functional complexes. Involved in the CO-mediated long-day flowering-promotion pathway. Engages CO and the transcriptional repressor TPL in a tripartite complex. In Arabidopsis thaliana (Mouse-ear cress), this protein is B-box domain protein 31.